We begin with the raw amino-acid sequence, 73 residues long: Large ribosomal subunit protein bL31c (73 aa).

Belongs to the bacterial ribosomal protein bL31 family. Type A subfamily. In terms of assembly, part of the 50S ribosomal subunit.

Its subcellular location is the plastid. It is found in the chloroplast. Its function is as follows. Binds the 23S rRNA. This is Large ribosomal subunit protein bL31c from Palmaria palmata (Dulse).